Here is a 93-residue protein sequence, read N- to C-terminus: UPF0147 protein PF0239 (93 aa).

The protein belongs to the UPF0147 family.

In Pyrococcus furiosus (strain ATCC 43587 / DSM 3638 / JCM 8422 / Vc1), this protein is UPF0147 protein PF0239.